Consider the following 528-residue polypeptide: Sphingosine-1-phosphate lyase (528 aa).

The helical transmembrane segment at 13 to 35 (PAKLVLATAGITAASILAYQAIT) threads the bilayer. The residue at position 324 (Lys-324) is an N6-(pyridoxal phosphate)lysine.

The protein belongs to the group II decarboxylase family. Sphingosine-1-phosphate lyase subfamily. Requires pyridoxal 5'-phosphate as cofactor.

It localises to the endoplasmic reticulum membrane. The enzyme catalyses sphinganine 1-phosphate = hexadecanal + phosphoethanolamine. It functions in the pathway lipid metabolism; sphingolipid metabolism. In terms of biological role, cleaves phosphorylated sphingoid bases (PSBs), such as sphingosine-1-phosphate, into fatty aldehydes and phosphoethanolamine. Sphingosine-1-phosphate (S1P) probably acts intracellularly as a second messenger perhaps by promoting cell proliferation; the absence of S1P lyase increases its concentration. This leads to increased lateral pseudopod formation as well as defects in the efficiency of chemotaxis. Overexpression of S1P lyase causes decreased growth rates, entry into stationary phase at lower cell density and increased sensitivity to the antitumor agents cisplatin and carboplatin; these effects are more pronounced in cells that express more enzyme. In Dictyostelium discoideum (Social amoeba), this protein is Sphingosine-1-phosphate lyase (sglA).